Reading from the N-terminus, the 212-residue chain is Probable GTP-binding protein EngB (212 aa).

The EngB-type G domain occupies 27-201 (GGIEIAFAGR…TRILSDWYQP (175 aa)). GTP contacts are provided by residues 35–42 (GRSNAGKS), 62–66 (GRTQL), 80–83 (DLPG), 147–150 (TKAD), and 180–182 (FSS). The Mg(2+) site is built by Ser-42 and Thr-64.

Belongs to the TRAFAC class TrmE-Era-EngA-EngB-Septin-like GTPase superfamily. EngB GTPase family. The cofactor is Mg(2+).

Its function is as follows. Necessary for normal cell division and for the maintenance of normal septation. The sequence is that of Probable GTP-binding protein EngB from Tolumonas auensis (strain DSM 9187 / NBRC 110442 / TA 4).